Here is a 491-residue protein sequence, read N- to C-terminus: MVPVIALVGRPNVGKSTLFNRLTKTRDAIVAEYAGLTRDRQYGEAKWQGRTYIVIDTGGISGDEEGIDAKMAEQSLQAIEEADAVLFMVDSRAGMTAADQLIAEHLRKRNKRSFLVANKVDTVDPDIARAEFSPLGLGDALPIAAAHGRGINAMLEAALGIFPRDDEGEEGEGEAEVVAEGEEPKRVPGPSEKDGIKIAIIGRPNVGKSTLVNRMLGEERVIVYDQAGTTRDSIYIPFERDEDKYTLIDTAGVRRRGKIFEAVEKFSVVKTLQAIQDANVVIFVMDAREGVVEHDLNLLGFVLETGRALVIALNKWDGMEPGQRDYVKIELERRLMFADFADIHFISALHGTGVGHLYKSVQAAFQSAVTRWPTSRLTRILEDAVQEHQPPLVNGRRIKLRYAHLGGANPPLIVIHGNQVEAVPKAYTRYLENTYRRVLKLVGTPIRIEYKGGDNPYEGKKNSLTERQVNKKRRLMSHHKKAEKKRRDKKR.

An EngA-type G 1 domain is found at proline 3 to aspartate 166. GTP is bound by residues glycine 9–serine 16, aspartate 56–isoleucine 60, and asparagine 118–aspartate 121. Residues arginine 164–serine 191 are disordered. Residues aspartate 166–glycine 181 show a composition bias toward acidic residues. Basic and acidic residues predominate over residues glutamate 182 to serine 191. The 174-residue stretch at isoleucine 196–valine 369 folds into the EngA-type G 2 domain. GTP contacts are provided by residues glycine 202–serine 209, aspartate 249–valine 253, and asparagine 314–aspartate 317. Residues threonine 370 to aspartate 454 form the KH-like domain. Residues glycine 452 to leucine 464 are compositionally biased toward basic and acidic residues. The disordered stretch occupies residues glycine 452–arginine 491. The segment covering asparagine 470 to arginine 491 has biased composition (basic residues).

Belongs to the TRAFAC class TrmE-Era-EngA-EngB-Septin-like GTPase superfamily. EngA (Der) GTPase family. As to quaternary structure, associates with the 50S ribosomal subunit.

GTPase that plays an essential role in the late steps of ribosome biogenesis. The polypeptide is GTPase Der (Azotobacter vinelandii (strain DJ / ATCC BAA-1303)).